Consider the following 257-residue polypeptide: Acetyl-coenzyme A carboxylase carboxyl transferase subunit beta 1 (257 aa).

One can recognise a CoA carboxyltransferase N-terminal domain in the interval M1 to A257.

It belongs to the AccD/PCCB family. As to quaternary structure, acetyl-CoA carboxylase is a heterohexamer composed of biotin carboxyl carrier protein (AccB), biotin carboxylase (AccC) and two subunits each of ACCase subunit alpha (AccA) and ACCase subunit beta (AccD).

The protein localises to the cytoplasm. It carries out the reaction N(6)-carboxybiotinyl-L-lysyl-[protein] + acetyl-CoA = N(6)-biotinyl-L-lysyl-[protein] + malonyl-CoA. The protein operates within lipid metabolism; malonyl-CoA biosynthesis; malonyl-CoA from acetyl-CoA: step 1/1. Component of the acetyl coenzyme A carboxylase (ACC) complex. Biotin carboxylase (BC) catalyzes the carboxylation of biotin on its carrier protein (BCCP) and then the CO(2) group is transferred by the transcarboxylase to acetyl-CoA to form malonyl-CoA. In Lachnospira eligens (strain ATCC 27750 / DSM 3376 / VPI C15-48 / C15-B4) (Eubacterium eligens), this protein is Acetyl-coenzyme A carboxylase carboxyl transferase subunit beta 1.